The following is a 289-amino-acid chain: Metal-staphylopine import system permease protein CntC (289 aa).

5 consecutive transmembrane segments (helical) span residues 13-33 (AVIA…APLV), 77-97 (LLYV…LGFL), 115-135 (VMLA…FGMG), 194-214 (IAII…GFSF), and 249-269 (IAIV…QIAI). Positions 73–262 (IRPSLLYVFV…IIVMAFNFLS (190 aa)) constitute an ABC transmembrane type-1 domain.

Belongs to the binding-protein-dependent transport system permease family. In terms of assembly, the complex is composed of two ATP-binding proteins (CntD and CntF), two transmembrane proteins (CntB and CntC) and a solute-binding protein (CntA).

The protein localises to the cell membrane. Nickel/cobalt import is reduced in the presence of zinc. In terms of biological role, part of the ABC transporter complex CntABCDF (Opp1) involved in the uptake of metal in complex with the metallophore staphylopine (StP). Involved in the import of divalent metals ions such as nickel, cobalt and zinc. Probably responsible for the translocation of the substrate across the membrane. Plays a major role in nickel/cobalt import in zinc-depleted conditions. Contributes to virulence. Required for full urease activity in vitro. The sequence is that of Metal-staphylopine import system permease protein CntC from Staphylococcus aureus (strain NCTC 8325 / PS 47).